The primary structure comprises 213 residues: Heavy metal-binding protein HIP (213 aa).

The C1q domain occupies 80–213; sequence FKSHHVAFSA…MSTFTGFMLH (134 aa).

Pallium, gill and liver.

It localises to the secreted. Functionally, binds heavy metals. May function as a carrier of divalent cations in plasma. This is Heavy metal-binding protein HIP from Mytilus edulis (Blue mussel).